A 727-amino-acid polypeptide reads, in one-letter code: DNA topoisomerase 3 (727 aa).

A Toprim domain is found at 3–136 (KTVVLAEKPS…IKRLWISSVT (134 aa)). Mg(2+)-binding residues include Glu-9 and Asp-105. A Topo IA-type catalytic domain is found at 153 to 593 (YENLYHSAVA…DMKAYAHQTV (441 aa)). An interaction with DNA region spans residues 187–192 (SCGRVQ). Catalysis depends on Tyr-310, which acts as the O-(5'-phospho-DNA)-tyrosine intermediate. The span at 685-699 (KRKNKDKARATKRDV) shows a compositional bias: basic and acidic residues. The disordered stretch occupies residues 685–714 (KRKNKDKARATKRDVSSYMKKQNKDEPINN).

The protein belongs to the type IA topoisomerase family. Mg(2+) serves as cofactor.

The catalysed reaction is ATP-independent breakage of single-stranded DNA, followed by passage and rejoining.. Functionally, releases the supercoiling and torsional tension of DNA, which is introduced during the DNA replication and transcription, by transiently cleaving and rejoining one strand of the DNA duplex. Introduces a single-strand break via transesterification at a target site in duplex DNA. The scissile phosphodiester is attacked by the catalytic tyrosine of the enzyme, resulting in the formation of a DNA-(5'-phosphotyrosyl)-enzyme intermediate and the expulsion of a 3'-OH DNA strand. The free DNA strand then undergoes passage around the unbroken strand, thus removing DNA supercoils. Finally, in the religation step, the DNA 3'-OH attacks the covalent intermediate to expel the active-site tyrosine and restore the DNA phosphodiester backbone. The chain is DNA topoisomerase 3 from Bacillus subtilis (strain 168).